Reading from the N-terminus, the 202-residue chain is NAD(P)H dehydrogenase (quinone) (202 aa).

The Flavodoxin-like domain maps to 7–193; the sequence is VLVLYYSMYG…TIARFQGRHF (187 aa). FMN is bound by residues 13–18 and 82–84; these read SMYGHI and TRF. Y15 contacts NAD(+). Position 102 (W102) interacts with substrate. FMN is bound by residues 117–122 and H137; that span reads STATGG.

This sequence belongs to the WrbA family. FMN is required as a cofactor.

It carries out the reaction a quinone + NADH + H(+) = a quinol + NAD(+). It catalyses the reaction a quinone + NADPH + H(+) = a quinol + NADP(+). The protein is NAD(P)H dehydrogenase (quinone) of Rhodospirillum rubrum (strain ATCC 11170 / ATH 1.1.1 / DSM 467 / LMG 4362 / NCIMB 8255 / S1).